The following is a 236-amino-acid chain: Purine nucleoside phosphorylase DeoD-type 2 (236 aa).

His-5 is an a purine D-ribonucleoside binding site. Phosphate contacts are provided by residues Gly-21, Arg-25, Arg-44, and 88-91 (RVGS). A purine D-ribonucleoside contacts are provided by residues 180–182 (DME) and 204–205 (SD). Residue Asp-205 is the Proton donor of the active site.

The protein belongs to the PNP/UDP phosphorylase family. As to quaternary structure, homohexamer; trimer of homodimers.

The catalysed reaction is a purine D-ribonucleoside + phosphate = a purine nucleobase + alpha-D-ribose 1-phosphate. The enzyme catalyses a purine 2'-deoxy-D-ribonucleoside + phosphate = a purine nucleobase + 2-deoxy-alpha-D-ribose 1-phosphate. In terms of biological role, catalyzes the reversible phosphorolytic breakdown of the N-glycosidic bond in the beta-(deoxy)ribonucleoside molecules, with the formation of the corresponding free purine bases and pentose-1-phosphate. The protein is Purine nucleoside phosphorylase DeoD-type 2 of Vibrio vulnificus (strain CMCP6).